The chain runs to 389 residues: Large envelope protein (389 aa).

The residue at position 1 (methionine 1) is an N-acetylmethionine. Glycine 2 is lipidated: N-myristoyl glycine; by host. Residues 2 to 108 form a pre-S1 region; it reads GQNLSTSNPL…PPLRDAHPQA (107 aa). Residues 2 to 163 form a pre-S region; sequence GQNLSTSNPL…FSKIGDLAPN (162 aa). Residues 2–170 are Virion surface; in external conformation-facing; sequence GQNLSTSNPL…APNMENITSG (169 aa). Over 2-242 the chain is Intravirion; in internal conformation; that stretch reads GQNLSTSNPL…PGYRWMCLRR (241 aa). Residues 76–103 form a disordered region; that stretch reads TLPANPPPAATNRQSGRQPTPLSPPLRD. The span at 86–95 shows a compositional bias: polar residues; the sequence is TNRQSGRQPT. Residues 109–163 are pre-S2; the sequence is MQWTSTTFHQALQDPRVRGLYFPAGGSSSGTVNPVPTTASPILSIFSKIGDLAPN. A helical transmembrane segment spans residues 171 to 191; sequence FLGPLLVLQAGFFLLTRILTI. At 192-242 the chain is on the intravirion; in external conformation side; sequence PQSLDSWWTSLNFLGGTTVCLGQNSQSPTSNHSPTSCPPTCPGYRWMCLRR. Residues 243–263 traverse the membrane as a helical segment; the sequence is FIIFLFILLLCLIFLLVLLDY. The Virion surface portion of the chain corresponds to 264–337; the sequence is QGMLPVCPLI…WASARFSWLS (74 aa). An N-linked (GlcNAc...) asparagine; by host glycan is attached at asparagine 309. The helical transmembrane segment at 338-358 threads the bilayer; sequence LLVPFVQWFAGLSPIVWLSVI. The Intravirion portion of the chain corresponds to 359-364; the sequence is WMMWYW. Residues 365–387 traverse the membrane as a helical segment; that stretch reads GPSLYSILSPFLPLLPIFFCLWA. Topologically, residues 388–389 are virion surface; that stretch reads YI.

It belongs to the orthohepadnavirus major surface antigen family. As to quaternary structure, in its internal form (Li-HBsAg), interacts with the capsid protein and with the isoform S. Interacts with host chaperone CANX. Associates with host chaperone CANX through its pre-S2 N glycan; this association may be essential for isoform M proper secretion. In terms of assembly, interacts with isoform L. Interacts with the antigens of satellite virus HDV (HDVAgs); this interaction is required for encapsidation of HDV genomic RNA. Isoform M is N-terminally acetylated by host at a ratio of 90%, and N-glycosylated by host at the pre-S2 region. In terms of processing, myristoylated.

The protein localises to the virion membrane. The large envelope protein exists in two topological conformations, one which is termed 'external' or Le-HBsAg and the other 'internal' or Li-HBsAg. In its external conformation the protein attaches the virus to cell receptors and thereby initiating infection. This interaction determines the species specificity and liver tropism. This attachment induces virion internalization predominantly through caveolin-mediated endocytosis. The large envelope protein also assures fusion between virion membrane and endosomal membrane. In its internal conformation the protein plays a role in virion morphogenesis and mediates the contact with the nucleocapsid like a matrix protein. In terms of biological role, the middle envelope protein plays an important role in the budding of the virion. It is involved in the induction of budding in a nucleocapsid independent way. In this process the majority of envelope proteins bud to form subviral lipoprotein particles of 22 nm of diameter that do not contain a nucleocapsid. The chain is Large envelope protein from Homo sapiens (Human).